The primary structure comprises 233 residues: Uridylate kinase (233 aa).

ATP is bound by residues 8–11 (KLSG), Gly-51, and Arg-55. Residues Asp-68 and 129–136 (TSNPFFTT) contribute to the UMP site. Residues Thr-156, Tyr-162, and Asp-165 each contribute to the ATP site.

It belongs to the UMP kinase family. As to quaternary structure, homohexamer.

It localises to the cytoplasm. It carries out the reaction UMP + ATP = UDP + ADP. It participates in pyrimidine metabolism; CTP biosynthesis via de novo pathway; UDP from UMP (UMPK route): step 1/1. Its activity is regulated as follows. Inhibited by UTP. Functionally, catalyzes the reversible phosphorylation of UMP to UDP. This is Uridylate kinase from Pseudothermotoga lettingae (strain ATCC BAA-301 / DSM 14385 / NBRC 107922 / TMO) (Thermotoga lettingae).